A 237-amino-acid polypeptide reads, in one-letter code: LexA repressor (237 aa).

A DNA-binding region (H-T-H motif) is located at residues 26 to 46 (FDEMKDALDLRSKSGIHRLIT). Active-site for autocatalytic cleavage activity residues include Ser-158 and Lys-196.

This sequence belongs to the peptidase S24 family. Homodimer.

It catalyses the reaction Hydrolysis of Ala-|-Gly bond in repressor LexA.. Functionally, represses a number of genes involved in the response to DNA damage (SOS response), including recA and lexA. In the presence of single-stranded DNA, RecA interacts with LexA causing an autocatalytic cleavage which disrupts the DNA-binding part of LexA, leading to derepression of the SOS regulon and eventually DNA repair. The polypeptide is LexA repressor (Rhodopseudomonas palustris (strain BisA53)).